A 351-amino-acid polypeptide reads, in one-letter code: Protein disulfide isomerase CRELD2 (351 aa).

Positions 1-21 (MRPPAPAVLGLLLLLLPTGEA) are cleaved as a signal peptide. The CXXC motif lies at 28 to 31 (CKRC). Disulfide bonds link Cys-28–Cys-31, Cys-137–Cys-151, Cys-145–Cys-163, and Cys-165–Cys-174. One can recognise an EGF-like 1 domain in the interval 133-175 (DCLACQGGSERPCSGNGHCVGDGTREGDGSCQCHLGYQGPLCS). The stretch at 190–237 (HSICSACDEACKTCVGPTNRDCGQCEVGWVRQDDACVDVDECAAEPPP) is one FU 1 repeat. Asn-248 carries an N-linked (GlcNAc...) asparagine glycan. The stretch at 250–297 (SFVCEECDPTCMGCTGKGPTQCRECIAGYSKESGQCEDIDECSLAEKP) is one FU 2 repeat. A CXXC motif is present at residues 260 to 263 (CMGC). Intrachain disulfides connect Cys-260-Cys-263, Cys-291-Cys-305, Cys-298-Cys-314, and Cys-316-Cys-327. Positions 287 to 328 (DIDECSLAEKPCLRDNENCYNTPGSFVCVCPDGFEEAEDTCV) constitute an EGF-like 2; calcium-binding domain. Positions 329–351 (QTRPAGAEATEASPTQPPSREDL) are disordered.

It belongs to the CRELD family. In terms of assembly, interacts with CHRNA4. Component of a complex containing at least CRELD2, MANF, MATN3 and PDIA4.

Its subcellular location is the endoplasmic reticulum. The catalysed reaction is Catalyzes the rearrangement of -S-S- bonds in proteins.. In terms of biological role, protein disulfide isomerase. Might play a role in the unfolded protein response. May regulate transport of alpha4-beta2 neuronal acetylcholine receptor. This chain is Protein disulfide isomerase CRELD2 (CRELD2), found in Bos taurus (Bovine).